Reading from the N-terminus, the 347-residue chain is Large ribosomal subunit protein uL3 (347 aa).

The protein belongs to the universal ribosomal protein uL3 family. As to quaternary structure, part of the 50S ribosomal subunit. Forms a cluster with proteins L14 and L24e.

In terms of biological role, one of the primary rRNA binding proteins, it binds directly near the 3'-end of the 23S rRNA, where it nucleates assembly of the 50S subunit. The protein is Large ribosomal subunit protein uL3 of Caldivirga maquilingensis (strain ATCC 700844 / DSM 13496 / JCM 10307 / IC-167).